Consider the following 388-residue polypeptide: Succinyl-diaminopimelate desuccinylase (388 aa).

Residue H71 coordinates Zn(2+). D73 is an active-site residue. D104 is a binding site for Zn(2+). E143 acts as the Proton acceptor in catalysis. Zn(2+) contacts are provided by E144, E172, and H361.

Belongs to the peptidase M20A family. DapE subfamily. Homodimer. Requires Zn(2+) as cofactor. It depends on Co(2+) as a cofactor.

It catalyses the reaction N-succinyl-(2S,6S)-2,6-diaminopimelate + H2O = (2S,6S)-2,6-diaminopimelate + succinate. It functions in the pathway amino-acid biosynthesis; L-lysine biosynthesis via DAP pathway; LL-2,6-diaminopimelate from (S)-tetrahydrodipicolinate (succinylase route): step 3/3. Its function is as follows. Catalyzes the hydrolysis of N-succinyl-L,L-diaminopimelic acid (SDAP), forming succinate and LL-2,6-diaminopimelate (DAP), an intermediate involved in the bacterial biosynthesis of lysine and meso-diaminopimelic acid, an essential component of bacterial cell walls. This chain is Succinyl-diaminopimelate desuccinylase, found in Bradyrhizobium diazoefficiens (strain JCM 10833 / BCRC 13528 / IAM 13628 / NBRC 14792 / USDA 110).